The following is a 205-amino-acid chain: LexA repressor (205 aa).

The segment at residues 29–49 (IRDICKATGLRSSSTVYNYLN) is a DNA-binding region (H-T-H motif). Residues Ser-128 and Lys-165 each act as for autocatalytic cleavage activity in the active site.

It belongs to the peptidase S24 family. Homodimer.

It carries out the reaction Hydrolysis of Ala-|-Gly bond in repressor LexA.. Functionally, represses a number of genes involved in the response to DNA damage (SOS response), including recA and lexA. In the presence of single-stranded DNA, RecA interacts with LexA causing an autocatalytic cleavage which disrupts the DNA-binding part of LexA, leading to derepression of the SOS regulon and eventually DNA repair. The sequence is that of LexA repressor from Moorella thermoacetica (strain ATCC 39073 / JCM 9320).